The chain runs to 496 residues: Probable malate:quinone oxidoreductase (496 aa).

It belongs to the MQO family. Requires FAD as cofactor.

The enzyme catalyses (S)-malate + a quinone = a quinol + oxaloacetate. The protein operates within carbohydrate metabolism; tricarboxylic acid cycle; oxaloacetate from (S)-malate (quinone route): step 1/1. The sequence is that of Probable malate:quinone oxidoreductase from Prochlorococcus marinus (strain NATL2A).